Here is a 507-residue protein sequence, read N- to C-terminus: uncharacterized protein (507 aa).

The span at 1 to 12 (MEKSISSISKAS) shows a compositional bias: low complexity. The interval 1–20 (MEKSISSISKASMNSDEKLD) is disordered. Helical transmembrane passes span 57 to 74 (FDFR…FNAL), 100 to 120 (IMIS…SYLY), 126 to 146 (ARIL…QAAV), 157 to 177 (WFLG…LTTF), 189 to 209 (IFYA…YGVF), 221 to 241 (YLFL…FLVL), 283 to 303 (VFKH…GVPL), 326 to 346 (LMTV…AFIS), 353 to 373 (GIVL…YGSI), 379 to 399 (IGVS…SSVL), 416 to 436 (VFTS…ANIF), and 445 to 465 (VPAL…VASI).

It belongs to the major facilitator superfamily. Allantoate permease family.

It localises to the endoplasmic reticulum. Its subcellular location is the membrane. This is an uncharacterized protein from Schizosaccharomyces pombe (strain 972 / ATCC 24843) (Fission yeast).